A 100-amino-acid chain; its full sequence is Nucleoid-associated protein ckrop_0143 (100 aa).

This sequence belongs to the YbaB/EbfC family. In terms of assembly, homodimer.

Its subcellular location is the cytoplasm. The protein resides in the nucleoid. Binds to DNA and alters its conformation. May be involved in regulation of gene expression, nucleoid organization and DNA protection. The polypeptide is Nucleoid-associated protein ckrop_0143 (Corynebacterium kroppenstedtii (strain DSM 44385 / JCM 11950 / CIP 105744 / CCUG 35717)).